Consider the following 373-residue polypeptide: UDP-N-acetylglucosamine--N-acetylmuramyl-(pentapeptide) pyrophosphoryl-undecaprenol N-acetylglucosamine transferase (373 aa).

Residues 10–12, asparagine 124, arginine 166, serine 196, and glutamine 301 each bind UDP-N-acetyl-alpha-D-glucosamine; that span reads TGG.

It belongs to the glycosyltransferase 28 family. MurG subfamily.

The protein localises to the cell membrane. The catalysed reaction is di-trans,octa-cis-undecaprenyl diphospho-N-acetyl-alpha-D-muramoyl-L-alanyl-D-glutamyl-meso-2,6-diaminopimeloyl-D-alanyl-D-alanine + UDP-N-acetyl-alpha-D-glucosamine = di-trans,octa-cis-undecaprenyl diphospho-[N-acetyl-alpha-D-glucosaminyl-(1-&gt;4)]-N-acetyl-alpha-D-muramoyl-L-alanyl-D-glutamyl-meso-2,6-diaminopimeloyl-D-alanyl-D-alanine + UDP + H(+). Its pathway is cell wall biogenesis; peptidoglycan biosynthesis. In terms of biological role, cell wall formation. Catalyzes the transfer of a GlcNAc subunit on undecaprenyl-pyrophosphoryl-MurNAc-pentapeptide (lipid intermediate I) to form undecaprenyl-pyrophosphoryl-MurNAc-(pentapeptide)GlcNAc (lipid intermediate II). In Desulforudis audaxviator (strain MP104C), this protein is UDP-N-acetylglucosamine--N-acetylmuramyl-(pentapeptide) pyrophosphoryl-undecaprenol N-acetylglucosamine transferase.